The sequence spans 309 residues: Porphobilinogen deaminase (309 aa).

Cys241 carries the S-(dipyrrolylmethanemethyl)cysteine modification.

The protein belongs to the HMBS family. As to quaternary structure, monomer. It depends on dipyrromethane as a cofactor.

The catalysed reaction is 4 porphobilinogen + H2O = hydroxymethylbilane + 4 NH4(+). It functions in the pathway porphyrin-containing compound metabolism; protoporphyrin-IX biosynthesis; coproporphyrinogen-III from 5-aminolevulinate: step 2/4. In terms of biological role, tetrapolymerization of the monopyrrole PBG into the hydroxymethylbilane pre-uroporphyrinogen in several discrete steps. The protein is Porphobilinogen deaminase of Desulforudis audaxviator (strain MP104C).